Consider the following 162-residue polypeptide: Probable chemoreceptor glutamine deamidase CheD (162 aa).

The protein belongs to the CheD family.

The catalysed reaction is L-glutaminyl-[protein] + H2O = L-glutamyl-[protein] + NH4(+). Functionally, probably deamidates glutamine residues to glutamate on methyl-accepting chemotaxis receptors (MCPs), playing an important role in chemotaxis. This Clostridium kluyveri (strain ATCC 8527 / DSM 555 / NBRC 12016 / NCIMB 10680 / K1) protein is Probable chemoreceptor glutamine deamidase CheD.